Here is a 527-residue protein sequence, read N- to C-terminus: Peptide chain release factor 3 (527 aa).

One can recognise a tr-type G domain in the interval 9–278 (NKRRTFAIIS…GLTQWAPKPQ (270 aa)). Residues 18–25 (SHPDAGKT), 86–90 (DTPGH), and 140–143 (NKLD) contribute to the GTP site.

The protein belongs to the TRAFAC class translation factor GTPase superfamily. Classic translation factor GTPase family. PrfC subfamily.

The protein localises to the cytoplasm. In terms of biological role, increases the formation of ribosomal termination complexes and stimulates activities of RF-1 and RF-2. It binds guanine nucleotides and has strong preference for UGA stop codons. It may interact directly with the ribosome. The stimulation of RF-1 and RF-2 is significantly reduced by GTP and GDP, but not by GMP. The polypeptide is Peptide chain release factor 3 (prfC) (Haemophilus influenzae (strain ATCC 51907 / DSM 11121 / KW20 / Rd)).